A 252-amino-acid polypeptide reads, in one-letter code: Imidazole glycerol phosphate synthase subunit HisF (252 aa).

Active-site residues include D11 and D130.

It belongs to the HisA/HisF family. Heterodimer of HisH and HisF.

The protein localises to the cytoplasm. The enzyme catalyses 5-[(5-phospho-1-deoxy-D-ribulos-1-ylimino)methylamino]-1-(5-phospho-beta-D-ribosyl)imidazole-4-carboxamide + L-glutamine = D-erythro-1-(imidazol-4-yl)glycerol 3-phosphate + 5-amino-1-(5-phospho-beta-D-ribosyl)imidazole-4-carboxamide + L-glutamate + H(+). The protein operates within amino-acid biosynthesis; L-histidine biosynthesis; L-histidine from 5-phospho-alpha-D-ribose 1-diphosphate: step 5/9. IGPS catalyzes the conversion of PRFAR and glutamine to IGP, AICAR and glutamate. The HisF subunit catalyzes the cyclization activity that produces IGP and AICAR from PRFAR using the ammonia provided by the HisH subunit. The chain is Imidazole glycerol phosphate synthase subunit HisF from Bacillus licheniformis (strain ATCC 14580 / DSM 13 / JCM 2505 / CCUG 7422 / NBRC 12200 / NCIMB 9375 / NCTC 10341 / NRRL NRS-1264 / Gibson 46).